A 98-amino-acid chain; its full sequence is Small ribosomal subunit protein bS20 (98 aa).

This sequence belongs to the bacterial ribosomal protein bS20 family.

Its function is as follows. Binds directly to 16S ribosomal RNA. This Kosmotoga olearia (strain ATCC BAA-1733 / DSM 21960 / TBF 19.5.1) protein is Small ribosomal subunit protein bS20.